Here is an 88-residue protein sequence, read N- to C-terminus: MALLDFFLSRKKNTANIAKERLQIIVAERRRSDAEPHYLPQLRKDILEVICKYVQIDPEMVTVQLEQKDGDISILELNVTLPEAEELK.

Belongs to the MinE family.

Functionally, prevents the cell division inhibition by proteins MinC and MinD at internal division sites while permitting inhibition at polar sites. This ensures cell division at the proper site by restricting the formation of a division septum at the midpoint of the long axis of the cell. This Escherichia coli (strain SMS-3-5 / SECEC) protein is Cell division topological specificity factor.